A 615-amino-acid polypeptide reads, in one-letter code: Zinc finger protein 653 (615 aa).

Disordered regions lie at residues 1–46 (MAER…ARRR), 93–115 (RSGRHGKPWEQVPKKPKRKKRRR), and 174–235 (PLSD…SGLI). Residues 7-25 (EPGAEAEAGAGGEAAAEEG) are compositionally biased toward low complexity. Residues 106–115 (KKPKRKKRRR) are compositionally biased toward basic residues. Composition is skewed to low complexity over residues 192–203 (GSSDSSSSGSSS) and 212–232 (QPAKASAAAAALTPASPTGSS). C2H2-type zinc fingers lie at residues 467 to 492 (FHCPYEGCSQVYVALSSFQNHVNLVH), 498 to 522 (KVCPHPGCGKKFYLSNHLRRHMIIH), 528 to 550 (FTCETCGKSFKRKNHLEVHRRTH), 556 to 578 (LQCEICGYQCRQRASLNWHMKKH), and 586 to 609 (FTCDRCGKRFEKLDSVKFHTLKSH).

Belongs to the krueppel C2H2-type zinc-finger protein family. In terms of assembly, interacts with NR5A1. In terms of tissue distribution, highly expressed in testis and spleen. Moderately expressed in lung, adrenal gland, uterus, and ovary. Very low expression in pancreas, heart, skeletal muscle, adipose tissue, kidney, and liver.

It is found in the nucleus. Transcriptional repressor. May repress NR5A1, PPARG, NR1H3, NR4A2, ESR1 and NR3C1 transcriptional activity. This Mus musculus (Mouse) protein is Zinc finger protein 653 (Znf653).